Reading from the N-terminus, the 125-residue chain is MIKLRLKRYGKKREASFRLVACNSTSRRDGRPLEELGFYNPRTKETRLDTEALRTRLSQGAQPTDAVRSLLEKGGLIEKTIRPAEIEGKKKQALARQSASKKAVKEKTEESKGSEVDSETSTSAD.

The tract at residues 87-125 (EGKKKQALARQSASKKAVKEKTEESKGSEVDSETSTSAD) is disordered. Residues 103-115 (AVKEKTEESKGSE) are compositionally biased toward basic and acidic residues.

Belongs to the bacterial ribosomal protein bS16 family.

This Prochlorococcus marinus (strain MIT 9211) protein is Small ribosomal subunit protein bS16.